A 251-amino-acid chain; its full sequence is 16S rRNA (guanine(1405)-N(7))-methyltransferase (251 aa).

S-adenosyl-L-methionine-binding positions include Tyr-56, 81–83 (HAS), Arg-87, Ala-111, Asp-131, 157–158 (DV), Phe-173, and Glu-182.

This sequence belongs to the methyltransferase superfamily. Aminoglycoside resistance family.

It catalyses the reaction guanosine(1405) in 16S rRNA + S-adenosyl-L-methionine = N(7)-methylguanosine(1405) in 16S rRNA + S-adenosyl-L-homocysteine. Specifically methylates the N(7) position of guanine 1405 in 16S rRNA. Confers resistance to various aminoglycosides, including kanamycin, tobramycin, amikacin, arbekacin, gentamicin, sisomicin and isepamicin. The chain is 16S rRNA (guanine(1405)-N(7))-methyltransferase (rmtB) from Serratia marcescens.